The chain runs to 633 residues: Kinesin-like motor protein 9 (633 aa).

A Kinesin motor domain is found at 1-392 (MIQIFLRVKK…MRYSANAREI (392 aa)). 94–101 (GVSGAGKT) contributes to the ATP binding site. Disordered regions lie at residues 393–423 (LPPP…TKAL), 531–556 (LEEE…SRKL), and 575–633 (KLWP…INEL). The segment covering 398–423 (NENSGSQSPSHSLLQKSKNTSSTKAL) has biased composition (polar residues). Residues 417–541 (TSSTKALTSH…EEESIKESSA (125 aa)) adopt a coiled-coil conformation. A compositionally biased stretch (polar residues) spans 578–587 (PQSTLIQAPN). Low complexity predominate over residues 604-623 (VSPIKPLSPSRRPPLTSLYS). Phosphoserine occurs at positions 605, 611, and 613. Over residues 624–633 (GTTDIDINEL) the composition is skewed to polar residues.

This sequence belongs to the TRAFAC class myosin-kinesin ATPase superfamily. Kinesin family. In terms of assembly, interacts with ase1. In terms of processing, phosphorylated by cdc2 and dephosphorylated by clp1. Dephosphorylation is required for the interaction with ase1.

The protein localises to the nucleus. Its subcellular location is the cytoplasm. The protein resides in the cytoskeleton. It is found in the microtubule organizing center. It localises to the spindle pole body. Its function is as follows. Kinesin-like motor protein involved in anaphase B spindle elongation. The protein is Kinesin-like motor protein 9 (klp9) of Schizosaccharomyces pombe (strain 972 / ATCC 24843) (Fission yeast).